Consider the following 336-residue polypeptide: Casein kinase II subunit alpha (336 aa).

A Protein kinase domain is found at 37–322 (YQLVRKLGRG…AREAMAHPYF (286 aa)). Residues 43–51 (LGRGKYSEV) and Lys-66 each bind ATP. The active-site Proton acceptor is the Asp-154.

This sequence belongs to the protein kinase superfamily. Ser/Thr protein kinase family. CK2 subfamily. Tetramer of two alpha and two beta chains. Mg(2+) serves as cofactor.

The protein resides in the nucleus. Its subcellular location is the nucleolus. It catalyses the reaction L-seryl-[protein] + ATP = O-phospho-L-seryl-[protein] + ADP + H(+). The enzyme catalyses L-threonyl-[protein] + ATP = O-phospho-L-threonyl-[protein] + ADP + H(+). In terms of biological role, casein kinases are operationally defined by their preferential utilization of acidic proteins such as caseins as substrates. The alpha chain contains the catalytic site. May participate in Wnt signaling. The protein is Casein kinase II subunit alpha (CkIIalpha) of Drosophila melanogaster (Fruit fly).